Reading from the N-terminus, the 198-residue chain is Proteasome subunit beta 1 (198 aa).

A propeptide spans 1 to 8 (MSMYMPGA) (removed in mature form; by autocatalysis). Threonine 9 acts as the Nucleophile in catalysis.

The protein belongs to the peptidase T1B family. In terms of assembly, the 20S proteasome core is composed of 14 alpha and 14 beta subunits that assemble into four stacked heptameric rings, resulting in a barrel-shaped structure. The two inner rings, each composed of seven catalytic beta subunits, are sandwiched by two outer rings, each composed of seven alpha subunits. The catalytic chamber with the active sites is on the inside of the barrel. Has a gated structure, the ends of the cylinder being occluded by the N-termini of the alpha-subunits. Is capped at one or both ends by the proteasome regulatory ATPase, PAN.

It is found in the cytoplasm. It catalyses the reaction Cleavage of peptide bonds with very broad specificity.. Its activity is regulated as follows. The formation of the proteasomal ATPase PAN-20S proteasome complex, via the docking of the C-termini of PAN into the intersubunit pockets in the alpha-rings, triggers opening of the gate for substrate entry. Interconversion between the open-gate and close-gate conformations leads to a dynamic regulation of the 20S proteasome proteolysis activity. In terms of biological role, component of the proteasome core, a large protease complex with broad specificity involved in protein degradation. The protein is Proteasome subunit beta 1 of Nitrosopumilus maritimus (strain SCM1).